A 131-amino-acid polypeptide reads, in one-letter code: Ribosome-binding factor A (131 aa).

This sequence belongs to the RbfA family. As to quaternary structure, monomer. Binds 30S ribosomal subunits, but not 50S ribosomal subunits or 70S ribosomes.

It is found in the cytoplasm. Functionally, one of several proteins that assist in the late maturation steps of the functional core of the 30S ribosomal subunit. Associates with free 30S ribosomal subunits (but not with 30S subunits that are part of 70S ribosomes or polysomes). Required for efficient processing of 16S rRNA. May interact with the 5'-terminal helix region of 16S rRNA. This chain is Ribosome-binding factor A, found in Protochlamydia amoebophila (strain UWE25).